A 319-amino-acid polypeptide reads, in one-letter code: MTQLDQLKQFTTVVADTGDFQAMRAYAPHDATTNPSLILKAVQKAEYRPLLEQAVRDARSDSVEDIIDAVLVAFGCEILSIIPGRVSTEVDARLSFDTAATVAKARHLIALYEARGVPRERVLIKIASTWEGIRAADQLRAEGIRCNMTLLFSLIQAVACAEAGVQLISPFVGRIYDWYKKDAGAAWDPIAQGGANDPGVQSVVRIYNYYKRFGYTTEVMGASFRNTSQIIELAGCDLLTISPELLAQLQQSDAPVERKLSPEHAHATNLVRLPADEAAFRWHMNADAMATEKLAEGIRLFAADAVKLEGLIGPLRAAA.

The Schiff-base intermediate with substrate role is filled by K125.

The protein belongs to the transaldolase family. Type 1 subfamily. In terms of assembly, homodimer.

The protein localises to the cytoplasm. The catalysed reaction is D-sedoheptulose 7-phosphate + D-glyceraldehyde 3-phosphate = D-erythrose 4-phosphate + beta-D-fructose 6-phosphate. Its pathway is carbohydrate degradation; pentose phosphate pathway; D-glyceraldehyde 3-phosphate and beta-D-fructose 6-phosphate from D-ribose 5-phosphate and D-xylulose 5-phosphate (non-oxidative stage): step 2/3. Its function is as follows. Transaldolase is important for the balance of metabolites in the pentose-phosphate pathway. The sequence is that of Transaldolase from Ralstonia nicotianae (strain ATCC BAA-1114 / GMI1000) (Ralstonia solanacearum).